Here is a 194-residue protein sequence, read N- to C-terminus: Phosphoheptose isomerase (194 aa).

The region spanning 31 to 186 (ICQRFQAGNK…CEQVESRLFA (156 aa)) is the SIS domain. 46–48 (NGG) contributes to the substrate binding site. Positions 55 and 59 each coordinate Zn(2+). Residues glutamate 59, 88-89 (ND), 114-116 (STS), serine 119, and glutamine 166 contribute to the substrate site. Zn(2+) contacts are provided by glutamine 166 and histidine 174.

It belongs to the SIS family. GmhA subfamily. Zn(2+) is required as a cofactor.

Its subcellular location is the cytoplasm. The enzyme catalyses 2 D-sedoheptulose 7-phosphate = D-glycero-alpha-D-manno-heptose 7-phosphate + D-glycero-beta-D-manno-heptose 7-phosphate. The protein operates within carbohydrate biosynthesis; D-glycero-D-manno-heptose 7-phosphate biosynthesis; D-glycero-alpha-D-manno-heptose 7-phosphate and D-glycero-beta-D-manno-heptose 7-phosphate from sedoheptulose 7-phosphate: step 1/1. Catalyzes the isomerization of sedoheptulose 7-phosphate in D-glycero-D-manno-heptose 7-phosphate. The protein is Phosphoheptose isomerase of Synechocystis sp. (strain ATCC 27184 / PCC 6803 / Kazusa).